A 360-amino-acid chain; its full sequence is Glutaminyl-peptide cyclotransferase (360 aa).

An N-terminal signal peptide occupies residues 1-23; sequence MKYLKILIIVTIFFFLLINVINC. An N-linked (GlcNAc...) asparagine glycan is attached at Asn135. A Zn(2+)-binding site is contributed by Asp165. Glu199 functions as the Proton acceptor in the catalytic mechanism. Glu200 provides a ligand contact to Zn(2+). The Proton acceptor role is filled by Asp251. Residue His330 participates in Zn(2+) binding.

The protein belongs to the glutaminyl-peptide cyclotransferase family.

The protein resides in the secreted. It catalyses the reaction N-terminal L-glutaminyl-[peptide] = N-terminal 5-oxo-L-prolyl-[peptide] + NH4(+). Its function is as follows. Responsible for the biosynthesis of pyroglutamyl peptides. Has a bias against acidic and tryptophan residues adjacent to the N-terminal glutaminyl residue and a lack of importance of chain length after the second residue. Also catalyzes N-terminal pyroglutamate formation. This Dictyostelium discoideum (Social amoeba) protein is Glutaminyl-peptide cyclotransferase (qpct).